Consider the following 1096-residue polypeptide: cAMP/cGMP-dependent 3',5'-cAMP/cGMP phosphodiesterase B (1096 aa).

Residues 216 to 248 are disordered; that stretch reads SSSKMIINDSPRTQQRNGTTEQQKKQQQQQYLQ. The segment covering 225–236 has biased composition (polar residues); it reads SPRTQQRNGTTE. A divalent metal cation is bound by residues histidine 573, histidine 575, and aspartate 577. A nucleoside 3',5'-cyclic phosphate is bound by residues 783 to 930 and 946 to 1070; these read VFSK…DLSH and ITQH…EDNI.

The protein belongs to the metallo-beta-lactamase superfamily. cNMP phosphodiesterase family. The cofactor is Mn(2+). Mg(2+) is required as a cofactor. Requires Zn(2+) as cofactor.

It is found in the cytoplasm. The protein localises to the cytosol. The enzyme catalyses 3',5'-cyclic AMP + H2O = AMP + H(+). It catalyses the reaction 3',5'-cyclic GMP + H2O = GMP + H(+). Its function is as follows. Dual specificity cAMP and cGMP phosphodiesterase with marked preference for cyclic AMP, which is activated by cAMP and cGMP. Likely functions as a cAMP-stimulated cAMP-phosphodiesterase which may play a role in regulating the cAMP relay response. The polypeptide is cAMP/cGMP-dependent 3',5'-cAMP/cGMP phosphodiesterase B (pdeE) (Dictyostelium discoideum (Social amoeba)).